Reading from the N-terminus, the 502-residue chain is Alpha-ketoglutarate-dependent dioxygenase FTO (502 aa).

The fe2OG dioxygenase domain stretch occupies residues 32–324; sequence TPKDDEFYQQ…SSTHRVAECS (293 aa). The substrate site is built by R96 and Y108. N202 provides a ligand contact to 2-oxoglutarate. Positions 210–221 are loop L1; predicted to block binding of double-stranded DNA or RNA; that stretch reads PYLKEEPYFGMG. The residue at position 213 (K213) is an N6-acetyllysine. Residues H228 and D230 each coordinate Fe cation. 228–231 provides a ligand contact to substrate; that stretch reads HHDE. 2-oxoglutarate is bound at residue Y292. H304 provides a ligand contact to Fe cation. Residues 313-315, T317, and R319 each bind 2-oxoglutarate; that span reads RFS.

It belongs to the fto family. As to quaternary structure, monomer. May also exist as homodimer. Fe(2+) serves as cofactor. Ubiquitous. Highly expressed in teeth and weakly in bone.

It localises to the nucleus. It is found in the nucleus speckle. The protein localises to the cytoplasm. It catalyses the reaction a 5'-end (N(7)-methyl 5'-triphosphoguanosine)-(N(6),2'-O-dimethyladenosine) in mRNA + 2-oxoglutarate + O2 = a 5'-end (N(7)-methyl 5'-triphosphoguanosine)-(2'-O-methyladenosine) in mRNA + formaldehyde + succinate + CO2. The enzyme catalyses an N(6)-methyladenosine in mRNA + 2-oxoglutarate + O2 = an adenosine in mRNA + formaldehyde + succinate + CO2. It carries out the reaction N(6)-methyladenosine in U6 snRNA + 2-oxoglutarate + O2 = adenosine in U6 snRNA + formaldehyde + succinate + CO2. The catalysed reaction is a 5'-end (N(7)-methyl 5'-triphosphoguanosine)-(N(6),2'-O-dimethyladenosine) in U6 snRNA + 2-oxoglutarate + O2 = a 5'-end (N(7)-methyl 5'-triphosphoguanosine)-(2'-O-methyladenosine) in U6 snRNA + formaldehyde + succinate + CO2. It catalyses the reaction an N(1)-methyladenosine in tRNA + 2-oxoglutarate + O2 = an adenosine in tRNA + formaldehyde + succinate + CO2. With respect to regulation, activated by ascorbate. Inhibited by N-oxalylglycine, fumarate and succinate. In terms of biological role, RNA demethylase that mediates oxidative demethylation of different RNA species, such as mRNAs, tRNAs and snRNAs, and acts as a regulator of fat mass, adipogenesis and energy homeostasis. Specifically demethylates N(6)-methyladenosine (m6A) RNA, the most prevalent internal modification of messenger RNA (mRNA) in higher eukaryotes. M6A demethylation by FTO affects mRNA expression and stability. Also able to demethylate m6A in U6 small nuclear RNA (snRNA). Mediates demethylation of N(6),2'-O-dimethyladenosine cap (m6A(m)), by demethylating the N(6)-methyladenosine at the second transcribed position of mRNAs and U6 snRNA. Demethylation of m6A(m) in the 5'-cap by FTO affects mRNA stability by promoting susceptibility to decapping. Also acts as a tRNA demethylase by removing N(1)-methyladenine from various tRNAs. Has no activity towards 1-methylguanine. Has no detectable activity towards double-stranded DNA. Also able to repair alkylated DNA and RNA by oxidative demethylation: demethylates single-stranded RNA containing 3-methyluracil, single-stranded DNA containing 3-methylthymine and has low demethylase activity towards single-stranded DNA containing 1-methyladenine or 3-methylcytosine. Ability to repair alkylated DNA and RNA is however unsure in vivo. Involved in the regulation of fat mass, adipogenesis and body weight, thereby contributing to the regulation of body size and body fat accumulation. Involved in the regulation of thermogenesis and the control of adipocyte differentiation into brown or white fat cells. Regulates activity of the dopaminergic midbrain circuitry via its ability to demethylate m6A in mRNAs. The polypeptide is Alpha-ketoglutarate-dependent dioxygenase FTO (Rattus norvegicus (Rat)).